We begin with the raw amino-acid sequence, 296 residues long: Formamidopyrimidine-DNA glycosylase (296 aa).

Pro-2 functions as the Schiff-base intermediate with DNA in the catalytic mechanism. Glu-3 functions as the Proton donor in the catalytic mechanism. Lys-61 serves as the catalytic Proton donor; for beta-elimination activity. Residues His-104, Arg-123, and Lys-169 each contribute to the DNA site. The segment at Asp-255 to Pro-289 adopts an FPG-type zinc-finger fold. The active-site Proton donor; for delta-elimination activity is the Arg-279.

Belongs to the FPG family. As to quaternary structure, monomer. Zn(2+) is required as a cofactor.

It catalyses the reaction Hydrolysis of DNA containing ring-opened 7-methylguanine residues, releasing 2,6-diamino-4-hydroxy-5-(N-methyl)formamidopyrimidine.. The enzyme catalyses 2'-deoxyribonucleotide-(2'-deoxyribose 5'-phosphate)-2'-deoxyribonucleotide-DNA = a 3'-end 2'-deoxyribonucleotide-(2,3-dehydro-2,3-deoxyribose 5'-phosphate)-DNA + a 5'-end 5'-phospho-2'-deoxyribonucleoside-DNA + H(+). Involved in base excision repair of DNA damaged by oxidation or by mutagenic agents. Acts as a DNA glycosylase that recognizes and removes damaged bases. Has a preference for oxidized purines, such as 7,8-dihydro-8-oxoguanine (8-oxoG). Has AP (apurinic/apyrimidinic) lyase activity and introduces nicks in the DNA strand. Cleaves the DNA backbone by beta-delta elimination to generate a single-strand break at the site of the removed base with both 3'- and 5'-phosphates. The chain is Formamidopyrimidine-DNA glycosylase from Mycobacterium sp. (strain JLS).